Consider the following 206-residue polypeptide: Holliday junction branch migration complex subunit RuvA (206 aa).

Residues 1–64 (MIAKLTGLLD…EDNIQLFGFA (64 aa)) form a domain I region. The interval 65–143 (DTEERDWFRL…SFGAPAPAAA (79 aa)) is domain II. The flexible linker stretch occupies residues 144-154 (TAGKGGAAPAG). The tract at residues 154–206 (GPAGAVADAVSALVNLGYRRVEAFTAVNAVAQRLGPEAGVSDLIRAGLKELSP) is domain III.

This sequence belongs to the RuvA family. As to quaternary structure, homotetramer. Forms an RuvA(8)-RuvB(12)-Holliday junction (HJ) complex. HJ DNA is sandwiched between 2 RuvA tetramers; dsDNA enters through RuvA and exits via RuvB. An RuvB hexamer assembles on each DNA strand where it exits the tetramer. Each RuvB hexamer is contacted by two RuvA subunits (via domain III) on 2 adjacent RuvB subunits; this complex drives branch migration. In the full resolvosome a probable DNA-RuvA(4)-RuvB(12)-RuvC(2) complex forms which resolves the HJ.

It localises to the cytoplasm. The RuvA-RuvB-RuvC complex processes Holliday junction (HJ) DNA during genetic recombination and DNA repair, while the RuvA-RuvB complex plays an important role in the rescue of blocked DNA replication forks via replication fork reversal (RFR). RuvA specifically binds to HJ cruciform DNA, conferring on it an open structure. The RuvB hexamer acts as an ATP-dependent pump, pulling dsDNA into and through the RuvAB complex. HJ branch migration allows RuvC to scan DNA until it finds its consensus sequence, where it cleaves and resolves the cruciform DNA. This chain is Holliday junction branch migration complex subunit RuvA, found in Rhodospirillum centenum (strain ATCC 51521 / SW).